Reading from the N-terminus, the 258-residue chain is Small ribosomal subunit protein uS2 (258 aa).

This sequence belongs to the universal ribosomal protein uS2 family.

The sequence is that of Small ribosomal subunit protein uS2 from Leuconostoc citreum (strain KM20).